The sequence spans 997 residues: Signal peptide, CUB and EGF-like domain-containing protein 2 (997 aa).

The first 28 residues, 1 to 28 (MGVAGCGRPREARALLLLLLLLPPLLAA), serve as a signal peptide directing secretion. Positions 43–83 (DVDECAQGLDDCHADALCQNTPTSYKCSCKPGYQGEGRQCE) constitute an EGF-like 1; calcium-binding domain. 8 cysteine pairs are disulfide-bonded: cysteine 47/cysteine 60, cysteine 54/cysteine 69, cysteine 71/cysteine 82, cysteine 88/cysteine 100, cysteine 96/cysteine 109, cysteine 111/cysteine 124, cysteine 130/cysteine 141, and cysteine 137/cysteine 150. The 42-residue stretch at 84 to 125 (DMDECDNTLNGGCVHDCLNIPGNYRCTCFDGFMLAHDGHNCL) folds into the EGF-like 2; calcium-binding domain. In terms of domain architecture, EGF-like 3; calcium-binding spans 126 to 162 (DMDECLENNGGCQHICTNVIGSYECRCKEGFFLSDNQ). EGF-like domains follow at residues 175–211 (CMNKDHGCGHICKEAPRGSVACECRPGFELAKNQKDC), 215–250 (CNHGNGGCQHSCEDTAEGPECSCHPRYRLHADGRSC), and 284–319 (CAVNNGGCDRTCKDTSTGVHCSCPTGFTLQVDGKTC). Residues 321–361 (DIDECQTRNGGCNHFCKNTVGSFDCSCKKGFKLLTDEKSCQ) enclose the EGF-like 7; calcium-binding domain. Cystine bridges form between cysteine 325/cysteine 336, cysteine 332/cysteine 345, cysteine 347/cysteine 360, cysteine 366/cysteine 376, cysteine 372/cysteine 385, cysteine 387/cysteine 399, cysteine 405/cysteine 416, cysteine 412/cysteine 425, and cysteine 427/cysteine 440. One can recognise an EGF-like 8; calcium-binding domain in the interval 362–400 (DVDECSLERTCDHSCINHPGTFICACNPGYTLYSFTHCG). Residues 401–441 (DTNECSVNNGGCQQVCINTVGSYECQCHPGFKLHWNKKDCV) form the EGF-like 9; calcium-binding domain. N-linked (GlcNAc...) asparagine glycosylation is present at asparagine 657. Cysteine 807 and cysteine 833 are oxidised to a cystine. Residues 807–919 (CGGELGDFTG…RGFQVPYVTY (113 aa)) enclose the CUB domain. Positions 845 to 854 (ILIVVPEIFL) are interaction with the cholesterol-anchor of SHH. An intrachain disulfide couples cysteine 860 to cysteine 881.

In terms of assembly, interacts with SHH via the cholesterol anchor of the dually lipid-modified SHH (ShhNp). Interacts with PTCH1. Forms homooligomers and heterooligomers with SCUBE1 and SCUBE3. Interacts with VEGFR2. Post-translationally, N-glycosylated. Expressed in adult heart, lung and testis.

It localises to the secreted. It is found in the cell surface. Functionally, lipid-binding protein required for SHH long-range signaling by binding to the dually lipid-modified SHH (ShhNp) and by promoting ShhNp mobilization, solubilization and release from the cell membrane. Acts by enhancing the proteolytic processing (shedding) of the lipid-modified N- and C- terminal of ShhNp at the cell surface. Synergizes with DISP1 to cause an increase in SHH secretion. Probable cell surface coreceptor for VEGFR2 involved in VEGFR2-mediated angiogenesis. The protein is Signal peptide, CUB and EGF-like domain-containing protein 2 of Mus musculus (Mouse).